A 494-amino-acid polypeptide reads, in one-letter code: Psoralen synthase (494 aa).

A helical transmembrane segment spans residues 12 to 29 (YFFSLFLVTIFLYKWLTL). Cys-436 is a heme binding site.

It belongs to the cytochrome P450 family.

It is found in the endoplasmic reticulum membrane. The protein resides in the microsome membrane. It carries out the reaction (7S)-marmesin + reduced [NADPH--hemoprotein reductase] + O2 = psoralen + acetone + oxidized [NADPH--hemoprotein reductase] + 2 H2O + H(+). With respect to regulation, inhibited by columbianetin. Functionally, involved in linear furanocumarin (psoralen) biosynthesis. Converts marmesin to psoralen. This is Psoralen synthase (CYP71AJ1) from Ammi majus (Bishop's weed).